Here is a 185-residue protein sequence, read N- to C-terminus: Biogenesis of lysosome-related organelles complex 1 subunit 5 (185 aa).

A disordered region spans residues 1 to 25 (MSGGGTETPVACDAAQGGKKRDSLG). The residue at position 2 (serine 2) is an N-acetylserine.

It belongs to the BLOC1S5 family. Octamer composed of one copy each BLOC1S1, BLOC1S2, BLOC1S3, BLOC1S4, BLOC1S5, BLOC1S6, DTNBP1/BLOC1S7 and SNAPIN/BLOC1S8. Component of the biogenesis of lysosome-related organelles complex 1 (BLOC-1) composed of BLOC1S1, BLOC1S2, BLOC1S3, BLOC1S4, BLOC1S5, BLOC1S6, DTNBP1/BLOC1S7 and SNAPIN/BLOC1S8. The BLOC-1 complex associates with the AP-3 protein complex and membrane protein cargos. Interacts with BLOC1S4, BLOC1S6, DTNBP1/BLOC1S7 and PI4K2A. As to expression, detected in heart, brain, spleen, lung, kidney and testis.

Functionally, component of the BLOC-1 complex, a complex that is required for normal biogenesis of lysosome-related organelles (LRO), such as platelet dense granules and melanosomes. In concert with the AP-3 complex, the BLOC-1 complex is required to target membrane protein cargos into vesicles assembled at cell bodies for delivery into neurites and nerve terminals. The BLOC-1 complex, in association with SNARE proteins, is also proposed to be involved in neurite extension. Plays a role in intracellular vesicle trafficking. In Mus musculus (Mouse), this protein is Biogenesis of lysosome-related organelles complex 1 subunit 5 (Bloc1s5).